The sequence spans 458 residues: UDP-N-acetylmuramoylalanine--D-glutamate ligase (458 aa).

124 to 130 contributes to the ATP binding site; sequence GSDGKTT.

It belongs to the MurCDEF family.

It localises to the cytoplasm. The catalysed reaction is UDP-N-acetyl-alpha-D-muramoyl-L-alanine + D-glutamate + ATP = UDP-N-acetyl-alpha-D-muramoyl-L-alanyl-D-glutamate + ADP + phosphate + H(+). Its pathway is cell wall biogenesis; peptidoglycan biosynthesis. Its function is as follows. Cell wall formation. Catalyzes the addition of glutamate to the nucleotide precursor UDP-N-acetylmuramoyl-L-alanine (UMA). In Clostridium botulinum (strain Langeland / NCTC 10281 / Type F), this protein is UDP-N-acetylmuramoylalanine--D-glutamate ligase.